Consider the following 138-residue polypeptide: Protein SchB (138 aa).

Residues 42 to 108 (VAVVRPGERI…NTGDVEARLV (67 aa)) form the Cupin type-2 domain. The interval 118 to 138 (PDLGHVDTEETDETAPAGVVS) is disordered.

The protein belongs to the SchB/CurC family.

This is Protein SchB (schB) from Streptomyces halstedii.